Reading from the N-terminus, the 529-residue chain is Cytochrome P450 monooxygenase patI (529 aa).

Residues Met1 to Pro8 lie on the Cytoplasmic side of the membrane. A helical transmembrane segment spans residues Ser9–Leu25. Topologically, residues Lys26–Asp529 are lumenal. N-linked (GlcNAc...) asparagine glycans are attached at residues Asn81 and Asn383. Cys449 serves as a coordination point for heme.

It belongs to the cytochrome P450 family. Heme serves as cofactor.

The protein resides in the endoplasmic reticulum membrane. It carries out the reaction 3-hydroxybenzyl alcohol + reduced [NADPH--hemoprotein reductase] + O2 = gentisyl alcohol + oxidized [NADPH--hemoprotein reductase] + H2O + H(+). The protein operates within mycotoxin biosynthesis; patulin biosynthesis. In terms of biological role, cytochrome P450 monooxygenase; part of the gene cluster that mediates the biosynthesis of patulin, an acetate-derived tetraketide mycotoxin produced by several fungal species that shows antimicrobial properties against several bacteria. PatI catalyzes the conversion of m-hydroxybenzyl alcohol into gentisyl alcohol. The pathway begins with the synthesis of 6-methylsalicylic acid by the polyketide synthase (PKS) patK via condensation of acetate and malonate units. The 6-methylsalicylic acid decarboxylase patG then catalyzes the decarboxylation of 6-methylsalicylic acid to yield m-cresol (also known as 3-methylphenol). These first reactions occur in the cytosol. The intermediate m-cresol is then transported into the endoplasmic reticulum where the cytochrome P450 monooxygenase patH converts it to m-hydroxybenzyl alcohol, which is further converted to gentisyl alcohol by the cytochrome P450 monooxygenase patI. The oxidoreductases patJ and patO further convert gentisyl alcohol to isoepoxydon in the vacuole. PatN catalyzes then the transformation of isoepoxydon into phyllostine. The cluster protein patF is responsible for the conversion from phyllostine to neopatulin whereas the alcohol dehydrogenase patD converts neopatulin to E-ascladiol. The steps between isoepoxydon and E-ascladiol occur in the cytosol, and E-ascladiol is probably secreted to the extracellular space by one of the cluster-specific transporters patC or patM. Finally, the secreted patulin synthase patE catalyzes the conversion of E-ascladiol to patulin. In Aspergillus clavatus (strain ATCC 1007 / CBS 513.65 / DSM 816 / NCTC 3887 / NRRL 1 / QM 1276 / 107), this protein is Cytochrome P450 monooxygenase patI.